The primary structure comprises 60 residues: Large ribosomal subunit protein uL30 (60 aa).

Belongs to the universal ribosomal protein uL30 family. In terms of assembly, part of the 50S ribosomal subunit.

This is Large ribosomal subunit protein uL30 from Bacillus mycoides (strain KBAB4) (Bacillus weihenstephanensis).